The chain runs to 107 residues: uncharacterized protein (107 aa).

Positions 1 to 32 (MDSLASGRWRRRRTEELPAAGDAKRACRRSEP) are disordered. Over residues 22 to 31 (DAKRACRRSE) the composition is skewed to basic and acidic residues.

This is an uncharacterized protein from Mus musculus (Mouse).